The sequence spans 711 residues: Polyribonucleotide nucleotidyltransferase (711 aa).

Mg(2+) contacts are provided by Asp490 and Asp496. One can recognise a KH domain in the interval 556 to 615 (PRIETMQIPTDKIREVIGSGGKVIREIVEVSGAKVDINDEGIIKIASPNGEAIKKAYDMI). Residues 625–693 (GMVYTGTVVK…DRGKVRLSMK (69 aa)) enclose the S1 motif domain.

This sequence belongs to the polyribonucleotide nucleotidyltransferase family. Mg(2+) serves as cofactor.

The protein resides in the cytoplasm. It carries out the reaction RNA(n+1) + phosphate = RNA(n) + a ribonucleoside 5'-diphosphate. Its function is as follows. Involved in mRNA degradation. Catalyzes the phosphorolysis of single-stranded polyribonucleotides processively in the 3'- to 5'-direction. This Roseobacter denitrificans (strain ATCC 33942 / OCh 114) (Erythrobacter sp. (strain OCh 114)) protein is Polyribonucleotide nucleotidyltransferase.